Reading from the N-terminus, the 37-residue chain is MKIRASVRKICEKCRLIRRRKRIMVICFNPKHKQKQG.

The protein belongs to the bacterial ribosomal protein bL36 family.

Its subcellular location is the plastid. It localises to the chloroplast. In Psilotum nudum (Whisk fern), this protein is Large ribosomal subunit protein bL36c.